A 1160-amino-acid chain; its full sequence is Carbamoyl phosphate synthase arginine-specific large chain, mitochondrial (1160 aa).

The carboxyphosphate synthetic domain stretch occupies residues 81-478 (AEHEKVKKVV…SLQKALRQVD (398 aa)). Residues R208, R248, G254, G255, K285, L287, E292, G318, I319, H320, Q361, and E375 each contribute to the ATP site. An ATP-grasp 1 domain is found at 212-404 (AKALNEINIP…LAYTAAKIAL (193 aa)). The Mg(2+) site is built by Q361, E375, and N377. Positions 361, 375, and 377 each coordinate Mn(2+). Positions 479-623 (PSFLGFMAMP…YTSYNASSHD (145 aa)) are oligomerization domain. A carbamoyl phosphate synthetic domain region spans residues 624 to 1012 (IDFNEHGTMV…AYWAALQSTQ (389 aa)). The region spanning 748-946 (SQILDKIGVD…FIDVATRSII (199 aa)) is the ATP-grasp 2 domain. 10 residues coordinate ATP: R784, K823, I825, E830, G855, V856, H857, S858, Q898, and E917. Positions 898, 917, and 919 each coordinate Mg(2+). Positions 898, 917, and 919 each coordinate Mn(2+). Residues 1013-1144 (NFKIPLPGQG…PSVLSEKKEM (132 aa)) form an allosteric domain region. Residues 1014–1160 (FKIPLPGQGI…WSEWIGSHDL (147 aa)) form the MGS-like domain.

Belongs to the CarB family. In terms of assembly, heterodimer composed of 2 chains; the small (or glutamine) chain promotes the hydrolysis of glutamine to ammonia, which is used by the large (or ammonia) chain to synthesize carbamoyl phosphate. Mg(2+) is required as a cofactor. Requires Mn(2+) as cofactor.

The protein resides in the mitochondrion. It carries out the reaction hydrogencarbonate + L-glutamine + 2 ATP + H2O = carbamoyl phosphate + L-glutamate + 2 ADP + phosphate + 2 H(+). The enzyme catalyses hydrogencarbonate + NH4(+) + 2 ATP = carbamoyl phosphate + 2 ADP + phosphate + 2 H(+). Its pathway is amino-acid biosynthesis; L-arginine biosynthesis; carbamoyl phosphate from bicarbonate: step 1/1. Its function is as follows. Large subunit of the arginine-specific carbamoyl phosphate synthase (CPSase). CPSase catalyzes the formation of carbamoyl phosphate from the ammonia moiety of glutamine, hydrogencarbonate, and phosphate donated by ATP, the first step of the arginine biosynthetic pathway. The large subunit (synthetase) binds the substrates ammonia (free or transferred from glutamine from the small subunit), hydrogencarbonate and ATP and carries out an ATP-coupled ligase reaction, activating hydrogencarbonate by forming carboxy phosphate which reacts with ammonia to form carbamoyl phosphate. In Schizosaccharomyces pombe (strain 972 / ATCC 24843) (Fission yeast), this protein is Carbamoyl phosphate synthase arginine-specific large chain, mitochondrial (arg4).